Reading from the N-terminus, the 189-residue chain is Cell division protein SepF (189 aa).

The tract at residues 18 to 64 (EVTDHEDVAKERPVKVQKTEQTPSQQQRKPERPQETVPPRRQHIKSD) is disordered. Basic and acidic residues predominate over residues 22-35 (HEDVAKERPVKVQK).

The protein belongs to the SepF family. In terms of assembly, homodimer. Interacts with FtsZ.

The protein localises to the cytoplasm. Functionally, cell division protein that is part of the divisome complex and is recruited early to the Z-ring. Probably stimulates Z-ring formation, perhaps through the cross-linking of FtsZ protofilaments. Its function overlaps with FtsA. The chain is Cell division protein SepF from Streptococcus thermophilus (strain ATCC BAA-250 / LMG 18311).